We begin with the raw amino-acid sequence, 196 residues long: Glycerol-3-phosphate acyltransferase (196 aa).

A run of 5 helical transmembrane segments spans residues 1–21 (MIIL…GYLT), 53–73 (AITA…GSLL), 78–98 (GALV…FLKF), 112–132 (IMTS…VMLI), and 152–172 (LLFG…VMIF).

Belongs to the PlsY family. In terms of assembly, probably interacts with PlsX.

The protein localises to the cell membrane. The enzyme catalyses an acyl phosphate + sn-glycerol 3-phosphate = a 1-acyl-sn-glycero-3-phosphate + phosphate. It functions in the pathway lipid metabolism; phospholipid metabolism. Its function is as follows. Catalyzes the transfer of an acyl group from acyl-phosphate (acyl-PO(4)) to glycerol-3-phosphate (G3P) to form lysophosphatidic acid (LPA). This enzyme utilizes acyl-phosphate as fatty acyl donor, but not acyl-CoA or acyl-ACP. The sequence is that of Glycerol-3-phosphate acyltransferase from Carboxydothermus hydrogenoformans (strain ATCC BAA-161 / DSM 6008 / Z-2901).